A 905-amino-acid polypeptide reads, in one-letter code: Dopamine D2-like receptor (905 aa).

The segment at 1–23 (MLSPFDWRRGISSSGTGGTMAAQ) is disordered. Residues 1–377 (MLSPFDWRRG…GELRVVDHNY (377 aa)) lie on the Extracellular side of the membrane. 8 N-linked (GlcNAc...) asparagine glycosylation sites follow: Asn88, Asn146, Asn156, Asn166, Asn174, Asn257, Asn314, and Asn343. A helical membrane pass occupies residues 378–398 (WALILILFPILTLFGNILVIL). At 399 to 416 (SVCRERSLQTVTNYFIVS) the chain is on the cytoplasmic side. The helical transmembrane segment at 417 to 437 (LAIADLLVAVVVMPFAVYFLV) threads the bilayer. Topologically, residues 438-450 (NGAWALPDVVCDF) are extracellular. Cysteines 448 and 525 form a disulfide. The chain crosses the membrane as a helical span at residues 451 to 471 (YIAMDVICSTSSIFNLVAISI). Residues 472–493 (DRYIAVTQPIKYAKHKNSRRVC) lie on the Cytoplasmic side of the membrane. The chain crosses the membrane as a helical span at residues 494-514 (LTILLVWAISAAIGSPIVLGL). At 515 to 531 (NNTPNREPDVCAFYNAD) the chain is on the extracellular side. A helical membrane pass occupies residues 532–552 (FILYSSLSSFYIPCIIMVFLY). Over 553 to 830 (WNIFKALRSR…AKKERKATKT (278 aa)) the chain is Cytoplasmic. Disordered regions lie at residues 600–631 (SRHA…ISPD), 702–753 (ATSA…SVGV), and 780–799 (DSTL…KNSQ). A compositionally biased stretch (low complexity) spans 702-722 (ATSAAPRSSGSPPDSPLPSGA). Positions 723-734 (TLQRSSVSSQRR) are enriched in polar residues. Residues 735–746 (PTGDDSPKRGEP) show a composition bias toward basic and acidic residues. A helical membrane pass occupies residues 831-851 (LAIVLGVFLFCWLPFFSCNIM). Residues 852–869 (DAMCAKFKKDCRPGLTAY) are Extracellular-facing. The helical transmembrane segment at 870–890 (MMTTWLGYINSFVNPVIYTIF) threads the bilayer. Topologically, residues 891-905 (NPEFRKAFKKIMHMG) are cytoplasmic.

Belongs to the G-protein coupled receptor 1 family. In terms of tissue distribution, highest expression is in adult heads.

It is found in the cell membrane. In terms of biological role, receptor for dopamine. The activity of this receptor is mediated by G proteins which inhibit adenylyl cyclase. The sequence is that of Dopamine D2-like receptor from Drosophila melanogaster (Fruit fly).